The following is a 385-amino-acid chain: Lipid-A-disaccharide synthase (385 aa).

The protein belongs to the LpxB family.

The catalysed reaction is a lipid X + a UDP-2-N,3-O-bis[(3R)-3-hydroxyacyl]-alpha-D-glucosamine = a lipid A disaccharide + UDP + H(+). It participates in bacterial outer membrane biogenesis; LPS lipid A biosynthesis. Condensation of UDP-2,3-diacylglucosamine and 2,3-diacylglucosamine-1-phosphate to form lipid A disaccharide, a precursor of lipid A, a phosphorylated glycolipid that anchors the lipopolysaccharide to the outer membrane of the cell. This Xylella fastidiosa (strain M12) protein is Lipid-A-disaccharide synthase.